A 267-amino-acid polypeptide reads, in one-letter code: Putative phosphatase bbp_030 (267 aa).

Residue aspartate 8 is the Nucleophile of the active site. Residue aspartate 8 participates in Mg(2+) binding. Position 9 (leucine 9) interacts with phosphate. Aspartate 10 is a binding site for Mg(2+). Residues threonine 42–glycine 43 and lysine 191 contribute to the phosphate site. Position 214 (aspartate 214) interacts with Mg(2+). Asparagine 217 is a phosphate binding site.

This sequence belongs to the HAD-like hydrolase superfamily. Cof family. The cofactor is Mg(2+).

This chain is Putative phosphatase bbp_030, found in Buchnera aphidicola subsp. Baizongia pistaciae (strain Bp).